Reading from the N-terminus, the 1496-residue chain is Chromosome partition protein MukB (1496 aa).

An ATP-binding site is contributed by 63–70 (GGNGAGKS). Coiled coils occupy residues 328–493 (KLEL…QRLS) and 536–632 (KMQA…APAW). A flexible hinge region spans residues 694–811 (PDGSDDVRLN…EVPLFGRAAR (118 aa)). 2 coiled-coil regions span residues 861 to 1171 (NPEE…SAEE) and 1235 to 1291 (IDAI…LQNI). The segment covering 1082–1091 (RARSRRDELQ) has biased composition (basic and acidic residues). A disordered region spans residues 1082–1101 (RARSRRDELQQRLSQQRSRK).

Belongs to the SMC family. MukB subfamily. In terms of assembly, homodimerization via its hinge domain. Binds to DNA via its C-terminal region. Interacts, and probably forms a ternary complex, with MukE and MukF via its C-terminal region. The complex formation is stimulated by calcium or magnesium. Interacts with tubulin-related protein FtsZ.

Its subcellular location is the cytoplasm. It is found in the nucleoid. In terms of biological role, plays a central role in chromosome condensation, segregation and cell cycle progression. Functions as a homodimer, which is essential for chromosome partition. Involved in negative DNA supercoiling in vivo, and by this means organize and compact chromosomes. May achieve or facilitate chromosome segregation by condensation DNA from both sides of a centrally located replisome during cell division. This Actinobacillus pleuropneumoniae serotype 3 (strain JL03) protein is Chromosome partition protein MukB.